The primary structure comprises 216 residues: Uracil phosphoribosyltransferase (216 aa).

30–34 serves as a coordination point for GTP; that stretch reads KNLVR. 5-phospho-alpha-D-ribose 1-diphosphate is bound by residues R80, R105, and 140 to 148; that span reads DPMIATAST. Residues I203 and 208-210 contribute to the uracil site; that span reads GDA. Residue D209 participates in 5-phospho-alpha-D-ribose 1-diphosphate binding.

This sequence belongs to the UPRTase family. Mg(2+) serves as cofactor.

The catalysed reaction is UMP + diphosphate = 5-phospho-alpha-D-ribose 1-diphosphate + uracil. Its pathway is pyrimidine metabolism; UMP biosynthesis via salvage pathway; UMP from uracil: step 1/1. Allosterically activated by GTP. Its function is as follows. Catalyzes the conversion of uracil and 5-phospho-alpha-D-ribose 1-diphosphate (PRPP) to UMP and diphosphate. The chain is Uracil phosphoribosyltransferase from Saccharolobus islandicus (strain M.16.4 / Kamchatka #3) (Sulfolobus islandicus).